We begin with the raw amino-acid sequence, 288 residues long: Type II iodothyronine deiodinase (288 aa).

Over 1–5 (MPHVN) the chain is Lumenal. The chain crosses the membrane as a helical; Signal-anchor for type III membrane protein span at residues 6–26 (LLVVLLILPGVFSNCLFLALY). At 27–288 (DAVSFLRRAL…SFLESVKASR (262 aa)) the chain is on the cytoplasmic side. The tract at residues 99–130 (SCAASSSSSHETPTPRTTAEAAATVTTSTTTT) is disordered. The active site involves U160. Residue U160 is a non-standard amino acid, selenocysteine.

The protein belongs to the iodothyronine deiodinase family. As to quaternary structure, predominantly monomer. Can form homodimers but homodimerization is not essential for enzyme activity. In terms of tissue distribution, expressed in intestine, liver, kidney and brain of immediately premetamorphic larvae, of larvae in all stages of metamorphosis and of parasitic feeding juveniles. In immediately premetamorphic larvae, levels are significantly higher in intestine and liver than in kidney and brain.

Its subcellular location is the endoplasmic reticulum membrane. The enzyme catalyses 3,3',5-triiodo-L-thyronine + iodide + A + H(+) = L-thyroxine + AH2. It carries out the reaction 3,3'-diiodo-L-thyronine + iodide + A + H(+) = 3,3',5'-triiodo-L-thyronine + AH2. The catalysed reaction is 3'-iodo-L-thyronine + iodide + A + H(+) = 3',5'-diiodo-L-thyronine + AH2. It catalyses the reaction 3,3'-diiodothyronamine + iodide + A + H(+) = 3,3',5'-triiodothyronamine + AH2. The enzyme catalyses 3'-iodothyronamine + iodide + A + H(+) = 3',5'-diiodothyronamine + AH2. Its function is as follows. Plays a crucial role in the metabolism of thyroid hormones (TH) and has specific roles in TH activation and inactivation by deiodination. Catalyzes the deiodination of L-thyroxine (T4) to 3,5,3'-triiodothyronine (T3), 3,3',5'-triiodothyronine (rT3) to 3,3'-diiodothyronine (3,3'-T2) and 3',5'-diiodothyronine (3',5'-T2) to 3'-monoiodothyronine (3'-T1) via outer-ring deiodination (ORD). Catalyzes the phenolic ring deiodinations of 3,3',5'-triiodothyronamine and 3',5'- diiodothyronamine. This is Type II iodothyronine deiodinase from Petromyzon marinus (Sea lamprey).